The sequence spans 68 residues: Non-disulfide-bridged peptide 5.6 (68 aa).

Positions 1 to 23 (MKTQVIIFIMAVVFLQLLSQSEA) are cleaved as a signal peptide. The propeptide occupies 37-68 (ELRNIDLDQFDDMFDEPEISAADMRFLQELLK).

Belongs to the non-disulfide-bridged peptide (NDBP) superfamily. Short antimicrobial peptide (group 4) family. As to expression, expressed by the venom gland.

It is found in the secreted. Its subcellular location is the target cell membrane. Antibacterial peptide with activity against both Gram-positive and Gram-negative bacteria probably by forming pores in the cell membrane. Also has weak hemolytic activity. Does not show antifungal activity. This Hoffmannihadrurus gertschi (Scorpion) protein is Non-disulfide-bridged peptide 5.6.